A 145-amino-acid polypeptide reads, in one-letter code: D-aminoacyl-tRNA deacylase (145 aa).

A Gly-cisPro motif, important for rejection of L-amino acids motif is present at residues 137-138 (GP).

This sequence belongs to the DTD family. Homodimer.

The protein resides in the cytoplasm. The catalysed reaction is glycyl-tRNA(Ala) + H2O = tRNA(Ala) + glycine + H(+). The enzyme catalyses a D-aminoacyl-tRNA + H2O = a tRNA + a D-alpha-amino acid + H(+). Functionally, an aminoacyl-tRNA editing enzyme that deacylates mischarged D-aminoacyl-tRNAs. Also deacylates mischarged glycyl-tRNA(Ala), protecting cells against glycine mischarging by AlaRS. Acts via tRNA-based rather than protein-based catalysis; rejects L-amino acids rather than detecting D-amino acids in the active site. By recycling D-aminoacyl-tRNA to D-amino acids and free tRNA molecules, this enzyme counteracts the toxicity associated with the formation of D-aminoacyl-tRNA entities in vivo and helps enforce protein L-homochirality. The chain is D-aminoacyl-tRNA deacylase from Idiomarina loihiensis (strain ATCC BAA-735 / DSM 15497 / L2-TR).